The primary structure comprises 477 residues: Aspartyl/glutamyl-tRNA(Asn/Gln) amidotransferase subunit B (477 aa).

The protein belongs to the GatB/GatE family. GatB subfamily. Heterotrimer of A, B and C subunits.

The enzyme catalyses L-glutamyl-tRNA(Gln) + L-glutamine + ATP + H2O = L-glutaminyl-tRNA(Gln) + L-glutamate + ADP + phosphate + H(+). It carries out the reaction L-aspartyl-tRNA(Asn) + L-glutamine + ATP + H2O = L-asparaginyl-tRNA(Asn) + L-glutamate + ADP + phosphate + 2 H(+). Functionally, allows the formation of correctly charged Asn-tRNA(Asn) or Gln-tRNA(Gln) through the transamidation of misacylated Asp-tRNA(Asn) or Glu-tRNA(Gln) in organisms which lack either or both of asparaginyl-tRNA or glutaminyl-tRNA synthetases. The reaction takes place in the presence of glutamine and ATP through an activated phospho-Asp-tRNA(Asn) or phospho-Glu-tRNA(Gln). This chain is Aspartyl/glutamyl-tRNA(Asn/Gln) amidotransferase subunit B, found in Lactococcus lactis subsp. cremoris (strain SK11).